A 219-amino-acid chain; its full sequence is Ribosomal RNA large subunit methyltransferase E (219 aa).

Residues G60, W62, D80, D96, and D120 each coordinate S-adenosyl-L-methionine. K160 serves as the catalytic Proton acceptor.

It belongs to the class I-like SAM-binding methyltransferase superfamily. RNA methyltransferase RlmE family.

The protein localises to the cytoplasm. The enzyme catalyses uridine(2552) in 23S rRNA + S-adenosyl-L-methionine = 2'-O-methyluridine(2552) in 23S rRNA + S-adenosyl-L-homocysteine + H(+). In terms of biological role, specifically methylates the uridine in position 2552 of 23S rRNA at the 2'-O position of the ribose in the fully assembled 50S ribosomal subunit. The sequence is that of Ribosomal RNA large subunit methyltransferase E from Acidithiobacillus ferrooxidans (strain ATCC 23270 / DSM 14882 / CIP 104768 / NCIMB 8455) (Ferrobacillus ferrooxidans (strain ATCC 23270)).